We begin with the raw amino-acid sequence, 1792 residues long: D-lysergyl-peptide-synthetase subunit 3 (1792 aa).

The adenylation (A) domain stretch occupies residues 239–642 (FRQRCDLHPN…GRKDSQIKIR (404 aa)). Positions 779 to 853 (SNEEHRLQRM…DLARKASQSV (75 aa)) constitute a Carrier domain. Serine 813 carries the post-translational modification O-(pantetheine 4'-phosphoryl)serine. Residues 895-1285 (EDIYPCTPMQ…HILGQIHGKE (391 aa)) form a condensation (C) domain region. The interval 1415–1640 (VTGANGFIGT…AGEFNSSAGS (226 aa)) is reductase (R) domain.

Belongs to the NRP synthetase family.

It functions in the pathway alkaloid biosynthesis; ergot alkaloid biosynthesis. D-lysergyl-peptide-synthetase subunit 3; part of the gene cluster that mediates the biosynthesis of fungal ergot alkaloid. DmaW catalyzes the first step of ergot alkaloid biosynthesis by condensing dimethylallyl diphosphate (DMAP) and tryptophan to form 4-dimethylallyl-L-tryptophan. The second step is catalyzed by the methyltransferase easF that methylates 4-dimethylallyl-L-tryptophan in the presence of S-adenosyl-L-methionine, resulting in the formation of 4-dimethylallyl-L-abrine. The catalase easC and the FAD-dependent oxidoreductase easE then transform 4-dimethylallyl-L-abrine to chanoclavine-I which is further oxidized by easD in the presence of NAD(+), resulting in the formation of chanoclavine-I aldehyde. Agroclavine dehydrogenase easG then mediates the conversion of chanoclavine-I aldehyde to agroclavine via a non-enzymatic adduct reaction: the substrate is an iminium intermediate that is formed spontaneously from chanoclavine-I aldehyde in the presence of glutathione. The presence of easA is not required to complete this reaction. Further conversion of agroclavine to paspalic acid is a two-step process involving oxidation of agroclavine to elymoclavine and of elymoclavine to paspalic acid, the second step being performed by the elymoclavine oxidase cloA. Paspalic acid is then further converted to D-lysergic acid. Ergopeptines are assembled from D-lysergic acid and three different amino acids by the D-lysergyl-peptide-synthetases composed each of a monomudular and a trimodular nonribosomal peptide synthetase subunit. LpsB and lpsC encode the monomodular subunits responsible for D-lysergic acid activation and incorporation into the ergopeptine backbone. LpsA1 and A2 subunits encode the trimodular nonribosomal peptide synthetase assembling the tripeptide portion of ergopeptines. LpsA1 is responsible for formation of the major ergopeptine, ergotamine, and lpsA2 for alpha-ergocryptine, the minor ergopeptine of the total alkaloid mixture elaborated by C.purpurea. D-lysergyl-tripeptides are assembled by the nonribosomal peptide synthetases and released as N-(D-lysergyl-aminoacyl)-lactams. Cyclolization of the D-lysergyl-tripeptides is performed by the Fe(2+)/2-ketoglutarate-dependent dioxygenase easH which introduces a hydroxyl group into N-(D-lysergyl-aminoacyl)-lactam at alpha-C of the aminoacyl residue followed by spontaneous condensation with the terminal lactam carbonyl group. This chain is D-lysergyl-peptide-synthetase subunit 3, found in Claviceps purpurea (strain 20.1) (Ergot fungus).